The primary structure comprises 442 residues: MTKGLKIVTIGGGSSYTPELVEGFIKRYDELPVRELWLVDIPEGEEKLNIVGTLAKRMVEKAGVPIDIHLTLDRRKALKDADFVTTQFRVGLLQARAKDERIPLKYGVIGQETNGPGGLFKGLRTIPVILEIAKDIEELCPNAWLVNFTNPAGMVTEALLRYSNLKKVVGLCNVPIGIKMGVAKALDVDVDRVEVQFAGLNHMVFGLDVFLDGVSVKEQVIEAMGDPKNAMTMKNISGAEWEPDFLKALNVIPCGYHRYYFKTKEMLEHELEASQTEGTRAEVVQKVEKELFELYKDPNLAIKPPQLEKRGGAYYSDAACNLISSIYNDKHDIQPVNTINNGAIASIPDDSAVEVNCVMTKTGPKPIAVGDLPVSVRGLVQQIKSFERVAAEAAVTGDYQTALLAMTINPLVPSDTVAKQILDEMLEAHKAYLPQFFNKIEA.

5–73 (LKIVTIGGGS…VPIDIHLTLD (69 aa)) provides a ligand contact to NAD(+). Residues R96 and N150 each contribute to the substrate site. Residues C172 and H202 each contribute to the Mn(2+) site. The active-site Proton acceptor is Y256.

Belongs to the glycosyl hydrolase 4 family. It depends on NAD(+) as a cofactor. Requires a divalent metal cation as cofactor.

It catalyses the reaction 6-phospho-beta-D-glucosyl-(1-&gt;4)-D-glucose + H2O = D-glucose 6-phosphate + D-glucose. Functionally, hydrolyzes phospho-beta-glucosides. This chain is Probable 6-phospho-beta-glucosidase (licH), found in Bacillus subtilis (strain 168).